A 259-amino-acid polypeptide reads, in one-letter code: Transcription factor bHLH80 (259 aa).

The disordered stretch occupies residues Met1 to Gly25. A compositionally biased stretch (gly residues) spans Gly9 to Glu20. A bHLH domain is found at Cys187 to Leu237.

In terms of assembly, homodimer. In terms of tissue distribution, expressed constitutively in roots, leaves, stems, and flowers.

The protein resides in the nucleus. The polypeptide is Transcription factor bHLH80 (BHLH80) (Arabidopsis thaliana (Mouse-ear cress)).